Here is a 342-residue protein sequence, read N- to C-terminus: ATPase asna-1 (342 aa).

26 to 33 is an ATP binding site; sequence KGGVGKTT. D55 is an active-site residue. ATP-binding residues include E243 and N270. The Zn(2+) site is built by C285 and C288.

The protein belongs to the arsA ATPase family. Homodimer.

Its subcellular location is the cytoplasm. The protein localises to the endoplasmic reticulum. Its function is as follows. ATPase required for the post-translational delivery of tail-anchored (TA) proteins to the endoplasmic reticulum. Recognizes and selectively binds the transmembrane domain of TA proteins in the cytosol. This complex then targets to the endoplasmic reticulum by membrane-bound receptors, where the tail-anchored protein is released for insertion. This process is regulated by ATP binding and hydrolysis. ATP binding drives the homodimer towards the closed dimer state, facilitating recognition of newly synthesized TA membrane proteins. ATP hydrolysis is required for insertion. Subsequently, the homodimer reverts towards the open dimer state, lowering its affinity for the membrane-bound receptor, and returning it to the cytosol to initiate a new round of targeting. May be involved in insulin signaling. The sequence is that of ATPase asna-1 from Caenorhabditis elegans.